Reading from the N-terminus, the 222-residue chain is uncharacterized protein (222 aa).

Transmembrane regions (helical) follow at residues 23–43 (FFAA…TGLL), 67–87 (IWVL…IGYL), 157–177 (IVGG…LGNV), and 187–207 (IILG…WHGY).

It belongs to the DedA family.

The protein localises to the cell membrane. This is an uncharacterized protein from Mycobacterium leprae (strain TN).